Reading from the N-terminus, the 292-residue chain is 4-hydroxy-tetrahydrodipicolinate synthase (292 aa).

Position 45 (Thr-45) interacts with pyruvate. The active-site Proton donor/acceptor is Tyr-133. Catalysis depends on Lys-161, which acts as the Schiff-base intermediate with substrate. Ile-203 contacts pyruvate.

Belongs to the DapA family. Homotetramer; dimer of dimers.

It localises to the cytoplasm. It carries out the reaction L-aspartate 4-semialdehyde + pyruvate = (2S,4S)-4-hydroxy-2,3,4,5-tetrahydrodipicolinate + H2O + H(+). It participates in amino-acid biosynthesis; L-lysine biosynthesis via DAP pathway; (S)-tetrahydrodipicolinate from L-aspartate: step 3/4. In terms of biological role, catalyzes the condensation of (S)-aspartate-beta-semialdehyde [(S)-ASA] and pyruvate to 4-hydroxy-tetrahydrodipicolinate (HTPA). This Salmonella arizonae (strain ATCC BAA-731 / CDC346-86 / RSK2980) protein is 4-hydroxy-tetrahydrodipicolinate synthase.